The chain runs to 71 residues: Small ribosomal subunit protein bS21 (71 aa).

The interval 47–71 is disordered; sequence RENATRAKRHAKRVARENARNTRLY. A compositionally biased stretch (basic and acidic residues) spans 60 to 71; the sequence is VARENARNTRLY.

Belongs to the bacterial ribosomal protein bS21 family.

This is Small ribosomal subunit protein bS21 from Histophilus somni (strain 129Pt) (Haemophilus somnus).